Reading from the N-terminus, the 154-residue chain is Nitrogen regulatory protein (154 aa).

A PTS EIIA type-2 domain is found at 6 to 150 (QILTPGRSLV…EALYQIVVDV (145 aa)). The Tele-phosphohistidine intermediate role is filled by histidine 68.

The protein localises to the cytoplasm. Seems to have a role in regulating nitrogen assimilation. The polypeptide is Nitrogen regulatory protein (ptsN) (Pseudomonas aeruginosa (strain ATCC 15692 / DSM 22644 / CIP 104116 / JCM 14847 / LMG 12228 / 1C / PRS 101 / PAO1)).